A 307-amino-acid chain; its full sequence is Acetyl-coenzyme A carboxylase carboxyl transferase subunit beta (307 aa).

Residues 25 to 294 (LWIKDPESGE…TEENGSRRLP (270 aa)) enclose the CoA carboxyltransferase N-terminal domain.

This sequence belongs to the AccD/PCCB family. As to quaternary structure, acetyl-CoA carboxylase is a heterohexamer composed of biotin carboxyl carrier protein (AccB), biotin carboxylase (AccC) and two subunits each of ACCase subunit alpha (AccA) and ACCase subunit beta (AccD).

The protein localises to the cytoplasm. It catalyses the reaction N(6)-carboxybiotinyl-L-lysyl-[protein] + acetyl-CoA = N(6)-biotinyl-L-lysyl-[protein] + malonyl-CoA. It participates in lipid metabolism; malonyl-CoA biosynthesis; malonyl-CoA from acetyl-CoA: step 1/1. Component of the acetyl coenzyme A carboxylase (ACC) complex. Biotin carboxylase (BC) catalyzes the carboxylation of biotin on its carrier protein (BCCP) and then the CO(2) group is transferred by the transcarboxylase to acetyl-CoA to form malonyl-CoA. In Chelativorans sp. (strain BNC1), this protein is Acetyl-coenzyme A carboxylase carboxyl transferase subunit beta.